The sequence spans 360 residues: Sorbitol dehydrogenase (360 aa).

Residue cysteine 42 coordinates Zn(2+). Tyrosine 48 lines the substrate pocket. Histidine 67 and glutamate 68 together coordinate Zn(2+). A substrate-binding site is contributed by glutamate 153. Residues aspartate 201, arginine 206, 277-279, and 301-303 each bind NAD(+); these read AGN and SFR. Arginine 303 and tyrosine 304 together coordinate substrate.

This sequence belongs to the zinc-containing alcohol dehydrogenase family. Homotetramer. Requires Zn(2+) as cofactor.

The enzyme catalyses keto-D-fructose + NADH + H(+) = D-sorbitol + NAD(+). Polyol dehydrogenase that catalyzes the reversible NAD(+)-dependent oxidation of various sugar alcohols. Is active with D-sorbitol (D-glucitol) as substrate, leading to the C2-oxidized product D-fructose. Suppresses growth arrest induced by a p53 tumor mutant in fission yeast. The polypeptide is Sorbitol dehydrogenase (tms1) (Schizosaccharomyces pombe (strain 972 / ATCC 24843) (Fission yeast)).